The chain runs to 168 residues: Transcription antitermination protein NusB (168 aa).

The protein belongs to the NusB family.

Its function is as follows. Involved in transcription antitermination. Required for transcription of ribosomal RNA (rRNA) genes. Binds specifically to the boxA antiterminator sequence of the ribosomal RNA (rrn) operons. The polypeptide is Transcription antitermination protein NusB (Deinococcus deserti (strain DSM 17065 / CIP 109153 / LMG 22923 / VCD115)).